The chain runs to 244 residues: Chalcone--flavanone isomerase (244 aa).

3 residues coordinate substrate: Thr45, Asn110, and Ser187.

It belongs to the chalcone isomerase family.

The catalysed reaction is a chalcone = a flavanone.. It functions in the pathway secondary metabolite biosynthesis; flavonoid biosynthesis. In terms of biological role, catalyzes the intramolecular cyclization of bicyclic chalcones into tricyclic (S)-flavanones. Responsible for the isomerization of 4,2',4',6'-tetrahydroxychalcone (also termed chalcone) into naringenin. In Nicotiana tabacum (Common tobacco), this protein is Chalcone--flavanone isomerase (CHI).